Consider the following 321-residue polypeptide: MTKYALVGDVGGTNARLALCDIASGEISQAKTYSGLDYPSLEAVIRVYLEEHKVEVKDGCIAIACPITGDWVAMTNHTWAFSIAEMKKNLGFSHLEIINDFTAVSMAIPMLKKEHLIQFGGAEPVEGKPIAVYGAGTGLGVAHLVHVDKRWVSLPGEGGHVDFAPNSEEEAIILEILRAEIGHVSAERVLSGPGLVNLYRAIVKADNRLPENLKPKDITERALADSCTDCRRALSLFCVIMGRFGGNLALNLGTFGGVFIAGGIVPRFLEFFKASGFRAAFEDKGRFKEYVHDIPVYLIVHDNPGLLGSGAHLRQTLGHIL.

ATP is bound at residue 8–13 (GDVGGT).

This sequence belongs to the bacterial glucokinase family.

The protein localises to the cytoplasm. The catalysed reaction is D-glucose + ATP = D-glucose 6-phosphate + ADP + H(+). Functionally, not highly important in E.coli as glucose is transported into the cell by the PTS system already as glucose 6-phosphate. The chain is Glucokinase from Escherichia coli O139:H28 (strain E24377A / ETEC).